The chain runs to 86 residues: Selenoprotein W (86 aa).

The cysteinyl-selenocysteine (Cys-Sec); redox-active cross-link spans Cys-10–Sec-13. Sec-13 is a non-standard amino acid (selenocysteine).

The protein belongs to the SelWTH family. Selenoprotein W subfamily.

Its subcellular location is the cytoplasm. Plays a role as a glutathione (GSH)-dependent antioxidant. May be involved in a redox-related process. May play a role in the myopathies of selenium deficiency. This is Selenoprotein W from Danio rerio (Zebrafish).